We begin with the raw amino-acid sequence, 3073 residues long: Adhesion G-protein coupled receptor G4 (3073 aa).

Residues methionine 1–serine 25 form the signal peptide. The Extracellular segment spans residues leucine 26 to arginine 2691. Positions lysine 29 to cysteine 228 constitute a Pentraxin (PTX) domain. Cystine bridges form between cysteine 58–cysteine 123 and cysteine 200–cysteine 228. Residue asparagine 233 is glycosylated (N-linked (GlcNAc...) asparagine). The tract at residues serine 253–glutamate 272 is disordered. N-linked (GlcNAc...) asparagine glycosylation is present at asparagine 662. 2 stretches are compositionally biased toward polar residues: residues glycine 671–valine 696 and glycine 929–threonine 951. Disordered regions lie at residues glycine 671–threonine 697 and serine 924–threonine 951. N-linked (GlcNAc...) asparagine glycosylation is found at asparagine 1141, asparagine 1304, and asparagine 1495. Disordered regions lie at residues phenylalanine 1565–threonine 1595, threonine 1741–threonine 1760, and isoleucine 1945–arginine 1972. Polar residues predominate over residues isoleucine 1945 to asparagine 1954. Residues serine 1955–arginine 1972 show a composition bias toward low complexity. A GAIN-B domain is found at serine 2535–threonine 2684. 2 disulfides stabilise this stretch: cysteine 2635/cysteine 2666 and cysteine 2654/cysteine 2668. Residues cysteine 2635–threonine 2684 form a GPS region. The stachel stretch occupies residues histidine 2673–threonine 2684. The helical transmembrane segment at isoleucine 2692–methionine 2712 threads the bilayer. Residues valine 2713–lysine 2728 lie on the Cytoplasmic side of the membrane. A helical transmembrane segment spans residues isoleucine 2729 to tryptophan 2749. The Extracellular segment spans residues leucine 2750 to lysine 2755. A helical transmembrane segment spans residues valine 2756–tryptophan 2776. Cysteine 2759 and cysteine 2836 are oxidised to a cystine. Residues methionine 2777–asparagine 2798 are Cytoplasmic-facing. The chain crosses the membrane as a helical span at residues tyrosine 2799 to leucine 2819. At serine 2820–histidine 2842 the chain is on the extracellular side. A helical membrane pass occupies residues isoleucine 2843–phenylalanine 2863. Topologically, residues cysteine 2864 to threonine 2892 are cytoplasmic. The helical transmembrane segment at isoleucine 2893–valine 2913 threads the bilayer. A topological domain (extracellular) is located at residue arginine 2914. A helical membrane pass occupies residues isoleucine 2915–phenylalanine 2935. Residues tyrosine 2936 to leucine 3073 are Cytoplasmic-facing.

The protein belongs to the G-protein coupled receptor 2 family. Adhesion G-protein coupled receptor (ADGR) subfamily. In terms of assembly, homodimer; homodimerizes via its Pentraxin domain in a calcium-independent manner. Heterodimer of 2 chains generated by proteolytic processing; the large extracellular N-terminal fragment and the membrane-bound C-terminal fragment predominantly remain associated and non-covalently linked. Autoproteolytically processed at the GPS region of the GAIN-B domain; this cleavage modulates receptor activity.

The protein resides in the membrane. Forms a heterodimer of 2 chains generated by proteolytic processing that remain associated through non-covalent interactions mediated by the GAIN-B domain. In the inactivated receptor, the Stachel sequence (also named stalk) is embedded in the GAIN-B domain, where it adopts a beta-strand conformation. On activation, the Stachel moves into the 7 transmembrane region and adopts a twisted hook-shaped configuration that forms contacts within the receptor, leading to coupling of a G-alpha protein, which activates signaling. The cleaved GAIN-B and N-terminal domains can then dissociate from the rest of the receptor. Orphan adhesion G-protein coupled receptor (aGPCR). Ligand binding causes a conformation change that triggers signaling via guanine nucleotide-binding proteins (G proteins) and modulates the activity of downstream effectors, such as adenylate cyclase. ADGRG4 is coupled to G(s) G proteins and mediates activation of adenylate cyclase activity. May be act as sensor of mechanical forces. The polypeptide is Adhesion G-protein coupled receptor G4 (Mus musculus (Mouse)).